We begin with the raw amino-acid sequence, 185 residues long: Peptidyl-tRNA hydrolase (185 aa).

Tyr14 contributes to the tRNA binding site. Residue His19 is the Proton acceptor of the active site. Tyr65, Asn67, and Asn113 together coordinate tRNA.

The protein belongs to the PTH family. Monomer.

The protein resides in the cytoplasm. It catalyses the reaction an N-acyl-L-alpha-aminoacyl-tRNA + H2O = an N-acyl-L-amino acid + a tRNA + H(+). In terms of biological role, hydrolyzes ribosome-free peptidyl-tRNAs (with 1 or more amino acids incorporated), which drop off the ribosome during protein synthesis, or as a result of ribosome stalling. Catalyzes the release of premature peptidyl moieties from peptidyl-tRNA molecules trapped in stalled 50S ribosomal subunits, and thus maintains levels of free tRNAs and 50S ribosomes. The sequence is that of Peptidyl-tRNA hydrolase from Rickettsia africae (strain ESF-5).